A 376-amino-acid chain; its full sequence is UDP-4-amino-4,6-dideoxy-N-acetyl-beta-L-altrosamine transaminase (376 aa).

Residues Y4, 24-27 (EILT), A54, and S176 contribute to the substrate site. K181 is modified (N6-(pyridoxal phosphate)lysine). Substrate is bound by residues N226 and 311–314 (QVHY).

The protein belongs to the DegT/DnrJ/EryC1 family.

The catalysed reaction is UDP-4-amino-4,6-dideoxy-N-acetyl-beta-L-altrosamine + 2-oxoglutarate = UDP-2-acetamido-2,6-dideoxy-beta-L-arabino-hex-4-ulose + L-glutamate. In terms of biological role, catalyzes the second step in the biosynthesis of pseudaminic acid, a sialic-acid-like sugar that is used to modify flagellin. Uses UDP-2-acetamido-2,6-dideoxy-beta-L-arabino-4-hexulose as substrate producing UDP-4-amino-4,6-dideoxy-beta-L-AltNAc. This is UDP-4-amino-4,6-dideoxy-N-acetyl-beta-L-altrosamine transaminase (pseC) from Campylobacter jejuni subsp. jejuni serotype O:2 (strain ATCC 700819 / NCTC 11168).